The primary structure comprises 244 residues: 5'-nucleotidase SurE 2 (244 aa).

Residues Asp8, Asp9, Ser39, and Asn96 each coordinate a divalent metal cation.

The protein belongs to the SurE nucleotidase family. A divalent metal cation serves as cofactor.

Its subcellular location is the cytoplasm. The enzyme catalyses a ribonucleoside 5'-phosphate + H2O = a ribonucleoside + phosphate. Functionally, nucleotidase that shows phosphatase activity on nucleoside 5'-monophosphates. The polypeptide is 5'-nucleotidase SurE 2 (Thermus thermophilus (strain ATCC BAA-163 / DSM 7039 / HB27)).